A 238-amino-acid polypeptide reads, in one-letter code: Mitochondrial inner membrane protease ATP23 (238 aa).

Residue histidine 138 participates in a divalent metal cation binding. The active site involves glutamate 139. Residue histidine 142 participates in a divalent metal cation binding.

The protein belongs to the peptidase M76 family.

The protein localises to the mitochondrion inner membrane. Has a dual role in the assembly of mitochondrial ATPase. Acts as a protease that removes N-terminal residues of mitochondrial ATPase CF(0) subunit 6 at the intermembrane space side. Also involved in the correct assembly of the membrane-embedded ATPase CF(0) particle, probably mediating association of subunit 6 with the subunit 9 ring. This Candida albicans (strain SC5314 / ATCC MYA-2876) (Yeast) protein is Mitochondrial inner membrane protease ATP23 (ATP23).